A 471-amino-acid polypeptide reads, in one-letter code: Cytochrome P450 monooxygenase afvE (471 aa).

The helical transmembrane segment at 265 to 285 (IIFYHFELSTPVAFFIIFAVY) threads the bilayer. Cys410 contacts heme.

It belongs to the cytochrome P450 family. Requires heme as cofactor.

The protein localises to the membrane. It functions in the pathway secondary metabolite biosynthesis. In terms of biological role, cytochrome P450 monooxygenase; part of the gene cluster that mediates the biosynthesis of aflavarin, a bicoumarin that exhibits anti-insectan activity against the fungivorous beetle C.hemipterus. The polypeptide is Cytochrome P450 monooxygenase afvE (Aspergillus flavus (strain ATCC 200026 / FGSC A1120 / IAM 13836 / NRRL 3357 / JCM 12722 / SRRC 167)).